Here is a 289-residue protein sequence, read N- to C-terminus: Dihydropteroate synthase (289 aa).

One can recognise a Pterin-binding domain in the interval 28–282 (TYVMGILNTT…DVEAMAQICK (255 aa)). Asparagine 35 provides a ligand contact to Mg(2+). (7,8-dihydropterin-6-yl)methyl diphosphate-binding positions include threonine 75, aspartate 109, asparagine 128, aspartate 199, lysine 235, and 270–272 (RVH).

This sequence belongs to the DHPS family. It depends on Mg(2+) as a cofactor.

The enzyme catalyses (7,8-dihydropterin-6-yl)methyl diphosphate + 4-aminobenzoate = 7,8-dihydropteroate + diphosphate. It functions in the pathway cofactor biosynthesis; tetrahydrofolate biosynthesis; 7,8-dihydrofolate from 2-amino-4-hydroxy-6-hydroxymethyl-7,8-dihydropteridine diphosphate and 4-aminobenzoate: step 1/2. Catalyzes the condensation of para-aminobenzoate (pABA) with 6-hydroxymethyl-7,8-dihydropterin diphosphate (DHPt-PP) to form 7,8-dihydropteroate (H2Pte), the immediate precursor of folate derivatives. The sequence is that of Dihydropteroate synthase (folP) from Synechocystis sp. (strain ATCC 27184 / PCC 6803 / Kazusa).